A 448-amino-acid chain; its full sequence is Probable tryptophanase (448 aa).

Lysine 253 carries the post-translational modification N6-(pyridoxal phosphate)lysine.

It belongs to the beta-eliminating lyase family. Pyridoxal 5'-phosphate serves as cofactor.

The enzyme catalyses L-tryptophan + H2O = indole + pyruvate + NH4(+). The protein operates within amino-acid degradation; L-tryptophan degradation via pyruvate pathway; indole and pyruvate from L-tryptophan: step 1/1. In Halobacterium salinarum (strain ATCC 29341 / DSM 671 / R1), this protein is Probable tryptophanase.